Reading from the N-terminus, the 225-residue chain is MRIVFDIGGSVLVPDEPDVKFIEEIAYQLTKISEDHEVAVVVGGGRVAREYIQAAKSFTPNETFKDYIGIHITRANAMLLIAALREKAYPFVVSDFRKAWEVMQLKKIPIMGGTHPGHTTDAVAALLAEYLQADLLVVITNVDGVYDSDPKKNPNAKKLDRISTEKLVEIAMQSESKAGGSGVVDALAAKFIQRGEIKTLIIGKDDARTLFDAIKGKHKGTLVEP.

9–10 (GS) contacts ATP. Glycine 44 contacts UMP. Residues glycine 45 and arginine 49 each coordinate ATP. UMP is bound by residues aspartate 66 and 114–120 (THPGHTT). ATP contacts are provided by threonine 140, asparagine 141, tyrosine 146, and aspartate 149.

The protein belongs to the UMP kinase family. Homohexamer.

It localises to the cytoplasm. The catalysed reaction is UMP + ATP = UDP + ADP. It functions in the pathway pyrimidine metabolism; CTP biosynthesis via de novo pathway; UDP from UMP (UMPK route): step 1/1. With respect to regulation, inhibited by UTP. Functionally, catalyzes the reversible phosphorylation of UMP to UDP. The sequence is that of Uridylate kinase from Thermococcus sibiricus (strain DSM 12597 / MM 739).